A 435-amino-acid polypeptide reads, in one-letter code: MTEQPINTKKKNGDISKAPTPQNTPASVTNSYMRSKPPTVSTIQESNNEDGTGAAAAAGGLANNPVLLSMIQGKLGDLVGKQSGYIDNLSKPVKNRVYGLKSLQLNQMKLEAQFQKELLELEKKFFAKYQPLYVKRKQIINGELEPTVEEIEEGQQLEEEEKGIDKEDGEEEEEEEEDDEEEDEQGIPGFWLTALENLSTVSETITDRDSEVLSNLIDIRMEYLSTPGFQLIFEFKPNDFFENQTLTKTYHYQAELGYSGDFVYDHADGCEIRWKSKENNVTITIERRKQRNKTTKQTRTIEKLTPTESFFNFFDPPKPPKIKSEDDDNDDKLQDKEEANDDDEGEEGDEEDEELEARLELDYQLGEEIKDRLIPRAIDWFTGDAVDFDYPELEGEGDEDEYSDEDGEGDSDDDDDDDDEAAGSQKQPPPECKQQ.

Positions 1–51 are disordered; the sequence is MTEQPINTKKKNGDISKAPTPQNTPASVTNSYMRSKPPTVSTIQESNNEDG. Ser-16 carries the phosphoserine modification. The span at 19–50 shows a compositional bias: polar residues; the sequence is PTPQNTPASVTNSYMRSKPPTVSTIQESNNED. Thr-20 and Thr-24 each carry phosphothreonine. At Ser-27 the chain carries Phosphoserine. Thr-29 bears the Phosphothreonine mark. Residues Ser-31 and Ser-35 each carry the phosphoserine modification. The residue at position 42 (Thr-42) is a Phosphothreonine. Ser-46 bears the Phosphoserine mark. Thr-52 is subject to Phosphothreonine. Composition is skewed to acidic residues over residues 146–185 and 338–355; these read PTVEEIEEGQQLEEEEKGIDKEDGEEEEEEEEDDEEEDEQ and EANDDDEGEEGDEEDEEL. 2 disordered regions span residues 146 to 187 and 308 to 435; these read PTVE…EQGI and ESFF…CKQQ. The span at 356-374 shows a compositional bias: basic and acidic residues; the sequence is EARLELDYQLGEEIKDRLI. The span at 386–421 shows a compositional bias: acidic residues; sequence VDFDYPELEGEGDEDEYSDEDGEGDSDDDDDDDDEA.

The protein belongs to the nucleosome assembly protein (NAP) family. Component of the GIN4 complex which forms a ring at the bud neck. In terms of processing, phosphorylation is cell cycle dependent and is important for its bud neck localization. Phosphorylation is highest in newly collected G1 cells, declines when the cells are traversing through the G1 phase, and reaches the lowest level around the time of bud emergence. Phosphorylation increases and remains high through the rest of the cell cycle until the beginning of the next one, when it decreases again. Phosphorylation involves two septin ring-associated kinases, CLA4 and GIN4, and its dephosphorylation occurs at the septin ring in a manner dependent on the phosphatases PP2A and CDC14.

It is found in the bud neck. The protein resides in the bud tip. Its function is as follows. Acidic protein, which assembles histones into an octamer. Involved in the regulation of the localization and the function of the septins during mitosis. The chain is Nucleosome assembly protein 1 (NAP1) from Candida albicans (strain SC5314 / ATCC MYA-2876) (Yeast).